Consider the following 674-residue polypeptide: RNA polymerase sigma factor RpoD (674 aa).

A disordered region spans residues 214–252 (AEGAAPAARRPASDEPEYDADGNPISRIDEEEDDDDSSN). A sigma-70 factor domain-2 region spans residues 440–510 (MVEANLRLVI…TRSIADQART (71 aa)). The short motif at 464 to 467 (DLIQ) is the Interaction with polymerase core subunit RpoC element. The segment at 519-595 (ETINKLVRTG…DKNAILPLDS (77 aa)) is sigma-70 factor domain-3. Residues 608 to 661 (VLASLTPREERVLRMRFGIGMNTDHTLEEVGQQFSVTRERIRQIEAKALRKLKH) are sigma-70 factor domain-4. The segment at residues 634–653 (LEEVGQQFSVTRERIRQIEA) is a DNA-binding region (H-T-H motif).

This sequence belongs to the sigma-70 factor family. RpoD/SigA subfamily. Interacts transiently with the RNA polymerase catalytic core.

The protein localises to the cytoplasm. Functionally, sigma factors are initiation factors that promote the attachment of RNA polymerase to specific initiation sites and are then released. This sigma factor is the primary sigma factor during exponential growth. This Rhodobacter capsulatus (strain ATCC BAA-309 / NBRC 16581 / SB1003) protein is RNA polymerase sigma factor RpoD.